A 239-amino-acid polypeptide reads, in one-letter code: mRNA turnover protein 4 homolog (239 aa).

Positions Q216–S239 are disordered. The segment covering M218–S239 has biased composition (acidic residues). 3 positions are modified to phosphoserine: S225, S229, and S233.

The protein belongs to the universal ribosomal protein uL10 family. Associates with the pre-60S ribosomal particle. Interacts with MINAS-60 (product of an alternative open reading frame of RBM10).

Its subcellular location is the nucleus. It is found in the nucleolus. The protein localises to the cytoplasm. In terms of biological role, component of the ribosome assembly machinery. Nuclear paralog of the ribosomal protein P0, it binds pre-60S subunits at an early stage of assembly in the nucleolus, and is replaced by P0 in cytoplasmic pre-60S subunits and mature 80S ribosomes. The protein is mRNA turnover protein 4 homolog (Mrto4) of Mus musculus (Mouse).